Reading from the N-terminus, the 60-residue chain is DNA-directed RNA polymerase subunit Rpo6 (60 aa).

Belongs to the archaeal Rpo6/eukaryotic RPB6 RNA polymerase subunit family. In terms of assembly, part of the RNA polymerase complex.

It is found in the cytoplasm. The enzyme catalyses RNA(n) + a ribonucleoside 5'-triphosphate = RNA(n+1) + diphosphate. Its function is as follows. DNA-dependent RNA polymerase (RNAP) catalyzes the transcription of DNA into RNA using the four ribonucleoside triphosphates as substrates. This Picrophilus torridus (strain ATCC 700027 / DSM 9790 / JCM 10055 / NBRC 100828 / KAW 2/3) protein is DNA-directed RNA polymerase subunit Rpo6.